Consider the following 171-residue polypeptide: Large ribosomal subunit protein bL9 (171 aa).

This sequence belongs to the bacterial ribosomal protein bL9 family.

Binds to the 23S rRNA. The sequence is that of Large ribosomal subunit protein bL9 from Rickettsia rickettsii (strain Iowa).